Reading from the N-terminus, the 288-residue chain is Nucleotide-binding protein Mlg_2233 (288 aa).

Position 11-18 (Gly11–Ser18) interacts with ATP. Position 63–66 (Asp63–Asn66) interacts with GTP.

The protein belongs to the RapZ-like family.

Displays ATPase and GTPase activities. The protein is Nucleotide-binding protein Mlg_2233 of Alkalilimnicola ehrlichii (strain ATCC BAA-1101 / DSM 17681 / MLHE-1).